A 331-amino-acid chain; its full sequence is Protoheme IX farnesyltransferase (331 aa).

9 helical membrane-spanning segments follow: residues L22–A42, F50–V70, F100–A120, I147–G167, W174–L194, I220–V240, L241–V261, A273–L293, and L307–M327.

The protein belongs to the UbiA prenyltransferase family. Protoheme IX farnesyltransferase subfamily.

It is found in the cell inner membrane. The catalysed reaction is heme b + (2E,6E)-farnesyl diphosphate + H2O = Fe(II)-heme o + diphosphate. It participates in porphyrin-containing compound metabolism; heme O biosynthesis; heme O from protoheme: step 1/1. Converts heme B (protoheme IX) to heme O by substitution of the vinyl group on carbon 2 of heme B porphyrin ring with a hydroxyethyl farnesyl side group. The sequence is that of Protoheme IX farnesyltransferase from Synechococcus sp. (strain JA-3-3Ab) (Cyanobacteria bacterium Yellowstone A-Prime).